Here is a 528-residue protein sequence, read N- to C-terminus: Tyrosine-protein kinase transforming protein Yes (528 aa).

The segment covering Asp1–Asn12 has biased composition (basic and acidic residues). Positions Asp1 to Pro35 are disordered. Over residues Ser18–Ser29 the composition is skewed to low complexity. Residues Gly81 to Ser142 enclose the SH3 domain. Residues Trp148–Cys245 enclose the SH2 domain. The 254-residue stretch at Leu267–Phe520 folds into the Protein kinase domain. ATP is bound by residues Leu273 to Val281 and Lys295. Catalysis depends on Asp386, which acts as the Proton acceptor. Tyr416 carries the phosphotyrosine; by autocatalysis modification.

It belongs to the protein kinase superfamily. Tyr protein kinase family. SRC subfamily.

It carries out the reaction L-tyrosyl-[protein] + ATP = O-phospho-L-tyrosyl-[protein] + ADP + H(+). This Galliformes (Y73SV) protein is Tyrosine-protein kinase transforming protein Yes (V-YES).